A 491-amino-acid chain; its full sequence is Probable protein phosphatase 2C 52 (491 aa).

Basic and acidic residues predominate over residues 1–11; that stretch reads MVYDGAVKDQE. The tract at residues 1–211 is disordered; the sequence is MVYDGAVKDQ…REREKERERV (211 aa). Low complexity predominate over residues 12–54; sequence SSANPASASAALSEASAAASEVTAAAAAGAGAGAAEEGAAVSG. Basic residues predominate over residues 66–78; sequence GVRHPLKHRRFRA. Residues 95 to 105 show a composition bias toward acidic residues; sequence VADEEASEVEQ. Over residues 187 to 211 the composition is skewed to basic and acidic residues; sequence VEEKKHKDQENKHKEREREKERERV. The PPM-type phosphatase domain occupies 229-475; the sequence is SCGYSSFRGK…DNITCIVVKF (247 aa). 4 residues coordinate Mn(2+): Asp265, Gly266, Asp427, and Asp466.

Belongs to the PP2C family. Requires Mg(2+) as cofactor. Mn(2+) serves as cofactor.

The enzyme catalyses O-phospho-L-seryl-[protein] + H2O = L-seryl-[protein] + phosphate. It carries out the reaction O-phospho-L-threonyl-[protein] + H2O = L-threonyl-[protein] + phosphate. This Oryza sativa subsp. japonica (Rice) protein is Probable protein phosphatase 2C 52.